The following is a 116-amino-acid chain: MRHRCRVKKLSKPADQRRALLRSLTTELIRHGKITTTLIRAKVLRSEVEKMITLAKNGSLAARREALGYIFDKQLVHALFEQVPTRYGDRQGGYTRILHTVPRRGDNAKMAIIELV.

It belongs to the bacterial ribosomal protein bL17 family. In terms of assembly, part of the 50S ribosomal subunit. Contacts protein L32.

This chain is Large ribosomal subunit protein bL17, found in Nostoc punctiforme (strain ATCC 29133 / PCC 73102).